Reading from the N-terminus, the 77-residue chain is Acyl carrier protein (77 aa).

The Carrier domain maps to 1-76 (MSVEQRVKEI…DVLDYIKSKQ (76 aa)). An O-(pantetheine 4'-phosphoryl)serine modification is found at S36.

This sequence belongs to the acyl carrier protein (ACP) family. 4'-phosphopantetheine is transferred from CoA to a specific serine of apo-ACP by AcpS. This modification is essential for activity because fatty acids are bound in thioester linkage to the sulfhydryl of the prosthetic group.

It localises to the cytoplasm. It participates in lipid metabolism; fatty acid biosynthesis. In terms of biological role, carrier of the growing fatty acid chain in fatty acid biosynthesis. The protein is Acyl carrier protein of Sulfurihydrogenibium sp. (strain YO3AOP1).